The primary structure comprises 384 residues: UDP-4-amino-4-deoxy-L-arabinose--oxoglutarate aminotransferase (384 aa).

Lys-182 carries the N6-(pyridoxal phosphate)lysine modification.

Belongs to the DegT/DnrJ/EryC1 family. ArnB subfamily. In terms of assembly, homodimer. The cofactor is pyridoxal 5'-phosphate.

The enzyme catalyses UDP-4-amino-4-deoxy-beta-L-arabinose + 2-oxoglutarate = UDP-beta-L-threo-pentopyranos-4-ulose + L-glutamate. The protein operates within nucleotide-sugar biosynthesis; UDP-4-deoxy-4-formamido-beta-L-arabinose biosynthesis; UDP-4-deoxy-4-formamido-beta-L-arabinose from UDP-alpha-D-glucuronate: step 2/3. Its pathway is bacterial outer membrane biogenesis; lipopolysaccharide biosynthesis. In terms of biological role, catalyzes the conversion of UDP-4-keto-arabinose (UDP-Ara4O) to UDP-4-amino-4-deoxy-L-arabinose (UDP-L-Ara4N). The modified arabinose is attached to lipid A and is required for resistance to polymyxin and cationic antimicrobial peptides. This chain is UDP-4-amino-4-deoxy-L-arabinose--oxoglutarate aminotransferase, found in Yersinia pseudotuberculosis serotype O:1b (strain IP 31758).